A 534-amino-acid polypeptide reads, in one-letter code: CTP synthase (534 aa).

An amidoligase domain region spans residues 1–268 (MSVKYIFVTG…AKIVCKRLGL (268 aa)). Ser14 contributes to the CTP binding site. Ser14 provides a ligand contact to UTP. ATP is bound at residue 15–20 (GLGKGI). Tyr55 is an L-glutamine binding site. Asp72 is a binding site for ATP. Mg(2+) is bound by residues Asp72 and Glu142. CTP is bound by residues 149–151 (DIE), 189–194 (KTKPTQ), and Lys225. Residues 189-194 (KTKPTQ) and Lys225 contribute to the UTP site. The Glutamine amidotransferase type-1 domain occupies 293–534 (TIGLVGKYVE…VRAAYEYKTK (242 aa)). An L-glutamine-binding site is contributed by Gly355. Cys382 serves as the catalytic Nucleophile; for glutamine hydrolysis. Residues 383–386 (LGMQ), Glu406, and Arg462 contribute to the L-glutamine site. Residues His507 and Glu509 contribute to the active site.

The protein belongs to the CTP synthase family. Homotetramer.

The catalysed reaction is UTP + L-glutamine + ATP + H2O = CTP + L-glutamate + ADP + phosphate + 2 H(+). It catalyses the reaction L-glutamine + H2O = L-glutamate + NH4(+). The enzyme catalyses UTP + NH4(+) + ATP = CTP + ADP + phosphate + 2 H(+). It participates in pyrimidine metabolism; CTP biosynthesis via de novo pathway; CTP from UDP: step 2/2. Allosterically activated by GTP, when glutamine is the substrate; GTP has no effect on the reaction when ammonia is the substrate. The allosteric effector GTP functions by stabilizing the protein conformation that binds the tetrahedral intermediate(s) formed during glutamine hydrolysis. Inhibited by the product CTP, via allosteric rather than competitive inhibition. Catalyzes the ATP-dependent amination of UTP to CTP with either L-glutamine or ammonia as the source of nitrogen. Regulates intracellular CTP levels through interactions with the four ribonucleotide triphosphates. This Ruminiclostridium cellulolyticum (strain ATCC 35319 / DSM 5812 / JCM 6584 / H10) (Clostridium cellulolyticum) protein is CTP synthase.